We begin with the raw amino-acid sequence, 434 residues long: Homoserine dehydrogenase (434 aa).

NADPH-binding residues include Thr-13 and Val-14. Positions 14, 33, and 43 each coordinate NAD(+). Val-14 contributes to the NADP(+) binding site. Position 45 (Arg-45) interacts with NADPH. Residues Arg-45, Arg-46, and Lys-103 each coordinate NADP(+). Lys-103 contributes to the NADPH binding site. Residues Glu-127, Val-130, Gly-132, and Ile-134 each contribute to the Na(+) site. NADP(+)-binding residues include Gly-185 and Glu-188. Positions 188 and 199 each coordinate L-homoserine. Lys-203 functions as the Proton donor in the catalytic mechanism. Gly-300 is an NADPH binding site. An NAD(+)-binding site is contributed by Gly-300. Gly-300 provides a ligand contact to NADP(+). The ACT domain maps to 353 to 429; sequence YLRIQAKDHP…GVSGPVVRIR (77 aa).

It belongs to the homoserine dehydrogenase family. The cofactor is a metal cation.

It catalyses the reaction L-homoserine + NADP(+) = L-aspartate 4-semialdehyde + NADPH + H(+). It carries out the reaction L-homoserine + NAD(+) = L-aspartate 4-semialdehyde + NADH + H(+). The protein operates within amino-acid biosynthesis; L-methionine biosynthesis via de novo pathway; L-homoserine from L-aspartate: step 3/3. It participates in amino-acid biosynthesis; L-threonine biosynthesis; L-threonine from L-aspartate: step 3/5. Its activity is regulated as follows. Feedback inhibition by threonine. Catalyzes the conversion of L-aspartate-beta-semialdehyde (L-Asa) to L-homoserine (L-Hse), the third step in the biosynthesis of threonine and methionine from aspartate. The polypeptide is Homoserine dehydrogenase (hom) (Pseudomonas aeruginosa (strain ATCC 15692 / DSM 22644 / CIP 104116 / JCM 14847 / LMG 12228 / 1C / PRS 101 / PAO1)).